A 259-amino-acid chain; its full sequence is DNA adenine methylase (259 aa).

Residues Tyr-7, Lys-11, Phe-32–Ser-37, Asp-50, His-156–Phe-157, Asp-171, and Tyr-181 contribute to the S-adenosyl-L-methionine site.

This sequence belongs to the N(4)/N(6)-methyltransferase family. Monomer.

The enzyme catalyses a 2'-deoxyadenosine in DNA + S-adenosyl-L-methionine = an N(6)-methyl-2'-deoxyadenosine in DNA + S-adenosyl-L-homocysteine + H(+). Functionally, an alpha subtype methylase, recognizes the double-stranded sequence 5'-GATC-3' and methylates A-2. Also acts on 5-hydroxymethylcytosine (hmC)-containing DNA, the normal base in this virus. May prevent degradation of viral DNA by the host restriction-modification antiviral defense system. The chain is DNA adenine methylase from Enterobacteria phage T4 (Bacteriophage T4).